The following is a 692-amino-acid chain: Methionine--tRNA ligase (692 aa).

Positions P12–H22 match the 'HIGH' region motif. Positions 143, 146, 156, and 159 each coordinate Zn(2+). The 'KMSKS' region signature appears at K341–S345. ATP is bound at residue K344. The tRNA-binding domain maps to D586 to R692.

It belongs to the class-I aminoacyl-tRNA synthetase family. MetG type 1 subfamily. Homodimer. Requires Zn(2+) as cofactor.

The protein localises to the cytoplasm. It catalyses the reaction tRNA(Met) + L-methionine + ATP = L-methionyl-tRNA(Met) + AMP + diphosphate. In terms of biological role, is required not only for elongation of protein synthesis but also for the initiation of all mRNA translation through initiator tRNA(fMet) aminoacylation. This Bordetella pertussis (strain Tohama I / ATCC BAA-589 / NCTC 13251) protein is Methionine--tRNA ligase.